We begin with the raw amino-acid sequence, 175 residues long: NADH-ubiquinone oxidoreductase chain 6 (175 aa).

A run of 5 helical transmembrane segments spans residues 1–21 (MMTYIAFILSTILVVSFVGFS), 25–45 (SPIYGGLGLIVSGGVGCGIVL), 48–68 (GGSFLGLMVFLIYLGGMLVVF), 88–108 (TVLSLFVLGFMAELLFAGYCI), and 149–169 (YGTWLVIVTGWSLVIGVLVVM).

The protein belongs to the complex I subunit 6 family. In terms of assembly, core subunit of respiratory chain NADH dehydrogenase (Complex I) which is composed of 45 different subunits.

The protein localises to the mitochondrion inner membrane. The enzyme catalyses a ubiquinone + NADH + 5 H(+)(in) = a ubiquinol + NAD(+) + 4 H(+)(out). In terms of biological role, core subunit of the mitochondrial membrane respiratory chain NADH dehydrogenase (Complex I) which catalyzes electron transfer from NADH through the respiratory chain, using ubiquinone as an electron acceptor. Essential for the catalytic activity and assembly of complex I. This is NADH-ubiquinone oxidoreductase chain 6 (MT-ND6) from Urotrichus talpoides (Japanese shrew mole).